The sequence spans 315 residues: Tyrosine recombinase XerC (315 aa).

The 92-residue stretch at 13-104 (ADLAAAREEW…GVRSLLRHLE (92 aa)) folds into the Core-binding (CB) domain. The 185-residue stretch at 125-309 (SLPKPLTADD…DTQRLLEVYD (185 aa)) folds into the Tyr recombinase domain. Active-site residues include R168, K193, H261, R264, and H287. Residue Y296 is the O-(3'-phospho-DNA)-tyrosine intermediate of the active site.

It belongs to the 'phage' integrase family. XerC subfamily. Forms a cyclic heterotetrameric complex composed of two molecules of XerC and two molecules of XerD.

It is found in the cytoplasm. Functionally, site-specific tyrosine recombinase, which acts by catalyzing the cutting and rejoining of the recombining DNA molecules. The XerC-XerD complex is essential to convert dimers of the bacterial chromosome into monomers to permit their segregation at cell division. It also contributes to the segregational stability of plasmids. The polypeptide is Tyrosine recombinase XerC (Brucella suis biovar 1 (strain 1330)).